A 450-amino-acid polypeptide reads, in one-letter code: Phosphomethylpyrimidine synthase (450 aa).

Substrate contacts are provided by residues asparagine 80, methionine 109, tyrosine 138, histidine 173, 193-195 (SRG), 234-237 (DSLR), and glutamate 273. Histidine 277 serves as a coordination point for Zn(2+). A substrate-binding site is contributed by tyrosine 300. A Zn(2+)-binding site is contributed by histidine 341. Cysteine 421, cysteine 424, and cysteine 429 together coordinate [4Fe-4S] cluster.

It belongs to the ThiC family. Homodimer. Requires [4Fe-4S] cluster as cofactor.

It catalyses the reaction 5-amino-1-(5-phospho-beta-D-ribosyl)imidazole + S-adenosyl-L-methionine = 4-amino-2-methyl-5-(phosphooxymethyl)pyrimidine + CO + 5'-deoxyadenosine + formate + L-methionine + 3 H(+). It participates in cofactor biosynthesis; thiamine diphosphate biosynthesis. Its function is as follows. Catalyzes the synthesis of the hydroxymethylpyrimidine phosphate (HMP-P) moiety of thiamine from aminoimidazole ribotide (AIR) in a radical S-adenosyl-L-methionine (SAM)-dependent reaction. The chain is Phosphomethylpyrimidine synthase from Campylobacter fetus subsp. fetus (strain 82-40).